A 61-amino-acid chain; its full sequence is Photosystem II reaction center protein K (61 aa).

The propeptide occupies 1–24 (MPNILSLTCICFNSVLCPTSFFFA). Residues 32–52 (IFNPIVDVMPVIPVLFFLLAF) form a helical membrane-spanning segment.

This sequence belongs to the PsbK family. As to quaternary structure, PSII is composed of 1 copy each of membrane proteins PsbA, PsbB, PsbC, PsbD, PsbE, PsbF, PsbH, PsbI, PsbJ, PsbK, PsbL, PsbM, PsbT, PsbX, PsbY, PsbZ, Psb30/Ycf12, at least 3 peripheral proteins of the oxygen-evolving complex and a large number of cofactors. It forms dimeric complexes.

It localises to the plastid. The protein resides in the chloroplast thylakoid membrane. In terms of biological role, one of the components of the core complex of photosystem II (PSII). PSII is a light-driven water:plastoquinone oxidoreductase that uses light energy to abstract electrons from H(2)O, generating O(2) and a proton gradient subsequently used for ATP formation. It consists of a core antenna complex that captures photons, and an electron transfer chain that converts photonic excitation into a charge separation. The sequence is that of Photosystem II reaction center protein K from Sorghum bicolor (Sorghum).